A 1004-amino-acid chain; its full sequence is Protein Wnt-5 (1004 aa).

An N-terminal signal peptide occupies residues 1-29 (MSCYRKRHFLLWLLRAVCMLHLTARGAYA). Residues Asn-60, Asn-66, Asn-115, and Asn-219 are each glycosylated (N-linked (GlcNAc...) asparagine). The disordered stretch occupies residues 238–298 (QKDKAKTSGA…NPGEQPIGGY (61 aa)). Residues Asn-307 and Asn-341 are each glycosylated (N-linked (GlcNAc...) asparagine). The tract at residues 310–407 (LLKPTDTDSH…ERDEWFRGQS (98 aa)) is disordered. Positions 389–403 (RREEQQRQRERDEWF) are enriched in basic and acidic residues. N-linked (GlcNAc...) asparagine glycosylation is present at Asn-422. A disordered region spans residues 438-472 (KVSSEGSDGELLSRVERSQPSISSSSSSSSSSSRK). Over residues 458–470 (SISSSSSSSSSSS) the composition is skewed to low complexity. 4 N-linked (GlcNAc...) asparagine glycosylation sites follow: Asn-484, Asn-485, Asn-528, and Asn-593. Cystine bridges form between Cys-583–Cys-594, Cys-633–Cys-641, and Cys-643–Cys-661. Asn-724 carries an N-linked (GlcNAc...) asparagine glycan. The interval 790 to 822 (FFKGEQQPRKKKRKNQRAAADAPAYPRNGIKES) is disordered. Cystine bridges form between Cys-862/Cys-876, Cys-864/Cys-871, Cys-933/Cys-964, Cys-949/Cys-959, Cys-963/Cys-1003, Cys-979/Cys-994, Cys-981/Cys-991, and Cys-986/Cys-987. The O-palmitoleoyl serine; by PORCN moiety is linked to residue Ser-868. N-linked (GlcNAc...) asparagine glycosylation is present at Asn-952.

Belongs to the Wnt family. As to quaternary structure, interacts with porcupine (por). In terms of processing, glycosylated, glycosylation is stimulated by porcupine at the ER. Palmitoleoylated by porcupine. The lipid group functions as a sorting signal, targeting the ligand to polarized vesicles that transport Wnt5 to unique sites at the cell surface. Depalmitoleoylated by notum, leading to inhibit Wnt signaling pathway. Dynamic expression pattern during embryogenesis. Expression is seen in the limb primordia of the head and thoracic segments, mesodermal and neurogenic regions.

The protein localises to the secreted. Its subcellular location is the extracellular space. It is found in the extracellular matrix. Its function is as follows. Binds as a ligand to a family of frizzled seven-transmembrane receptors and acts through a cascade of genes on the nucleus. Probable developmental protein. May be a signaling molecule which affects the development of discrete regions of tissues. Is likely to signal over only few cell diameters. May have a role in limb and CNS development; may be a downstream target of Dll that acts in the specification of these primordia. This Drosophila melanogaster (Fruit fly) protein is Protein Wnt-5 (Wnt5).